A 504-amino-acid chain; its full sequence is U3 snoRNP-associated protein-like YAO (504 aa).

Residues Met-1–Glu-120 form a disordered region. Positions Gly-20–Lys-33 are enriched in basic and acidic residues. 2 stretches are compositionally biased toward acidic residues: residues Asp-41–Glu-54 and Glu-70–Thr-81. Basic and acidic residues predominate over residues Leu-89–Glu-106. Over residues Glu-107–Glu-120 the composition is skewed to acidic residues. WD repeat units follow at residues Lys-159–Tyr-198, Asn-220–Ala-259, Gly-262–Glu-301, Gly-304–Tyr-342, Ala-344–Val-382, Ser-413–Leu-452, and Pro-456–Val-496.

It belongs to the WD repeat RRP9 family. In terms of tissue distribution, expressed in tissues with active in cell division such as shoot apexes, root tips, lateral root primordia, embryos, endosperm, pollen grains and embryo sacs.

It is found in the nucleus. It localises to the nucleolus. Component of a nucleolar small nuclear ribonucleoprotein particle (snoRNP) thought to participate in the processing and modification of pre-ribosomal RNA. Essential for embryogenesis. Plays a critical role in embryo sac development and gametic cell fate. Required for the correct positioning of the first division plane of zygote. May function during early embryogenesis. This is U3 snoRNP-associated protein-like YAO from Arabidopsis thaliana (Mouse-ear cress).